Reading from the N-terminus, the 506-residue chain is Chorion-specific transcription factor GCMb (506 aa).

Positions 19 to 174 (LSWDINDPQM…KSETEARRSA (156 aa)) form a DNA-binding region, GCM. The Zn(2+) site is built by C81, C87, C91, C118, C121, C130, H157, and H159. Over residues 155–172 (GVHDHPRPESKSETEARR) the composition is skewed to basic and acidic residues. Positions 155-213 (GVHDHPRPESKSETEARRSAIKRQMASFYQPQKKRIRESEAEENQDSSGHFSNIPPLEN) are disordered. Residues 379 to 395 (LQTVITTTTKVSYQAYQ) form a C-terminal conserved inhibitory domain (CCID) region.

The protein resides in the nucleus. Transcription factor that binds specific sequences on gene promoters and activate their transcription. Through the regulation of gene transcription, may play a role in parathyroid gland development. The protein is Chorion-specific transcription factor GCMb of Homo sapiens (Human).